The following is a 298-amino-acid chain: Lipoyl synthase (298 aa).

[4Fe-4S] cluster is bound by residues cysteine 43, cysteine 48, cysteine 54, cysteine 69, cysteine 73, cysteine 76, and serine 280. Residues phenylalanine 55–proline 269 form the Radical SAM core domain.

The protein belongs to the radical SAM superfamily. Lipoyl synthase family. [4Fe-4S] cluster is required as a cofactor.

The protein localises to the cytoplasm. The enzyme catalyses [[Fe-S] cluster scaffold protein carrying a second [4Fe-4S](2+) cluster] + N(6)-octanoyl-L-lysyl-[protein] + 2 oxidized [2Fe-2S]-[ferredoxin] + 2 S-adenosyl-L-methionine + 4 H(+) = [[Fe-S] cluster scaffold protein] + N(6)-[(R)-dihydrolipoyl]-L-lysyl-[protein] + 4 Fe(3+) + 2 hydrogen sulfide + 2 5'-deoxyadenosine + 2 L-methionine + 2 reduced [2Fe-2S]-[ferredoxin]. It functions in the pathway protein modification; protein lipoylation via endogenous pathway; protein N(6)-(lipoyl)lysine from octanoyl-[acyl-carrier-protein]: step 2/2. Functionally, catalyzes the radical-mediated insertion of two sulfur atoms into the C-6 and C-8 positions of the octanoyl moiety bound to the lipoyl domains of lipoate-dependent enzymes, thereby converting the octanoylated domains into lipoylated derivatives. The sequence is that of Lipoyl synthase from Nitratidesulfovibrio vulgaris (strain ATCC 29579 / DSM 644 / CCUG 34227 / NCIMB 8303 / VKM B-1760 / Hildenborough) (Desulfovibrio vulgaris).